We begin with the raw amino-acid sequence, 213 residues long: Sclerostin (213 aa).

An N-terminal signal peptide occupies residues 1–23; that stretch reads MQLPLALCLVCLLVHTAFRVVEG. The disordered stretch occupies residues 41 to 71; sequence GEYPEPPPELENNKTMNRAENGGRPPHHPFE. N53 carries an N-linked (GlcNAc...) asparagine glycan. Disulfide bonds link C80/C134, C94/C148, C105/C165, and C109/C167. In terms of domain architecture, CTCK spans 82–172; it reads ELHFTRYVTD…ASCKCKRLTR (91 aa). N175 carries N-linked (GlcNAc...) asparagine glycosylation. The interval 178–213 is disordered; that stretch reads ELKDFGTEAARPQKGRKPRPRARSAKANQAELENAY. The segment covering 190-201 has biased composition (basic residues); it reads QKGRKPRPRARS.

It belongs to the sclerostin family. In terms of assembly, interacts with LRP4 (via the extracellular domain); the interaction facilitates the inhibition of Wnt signaling. Interacts with LRP5 (via the first two YWTD-EGF repeat domains); the interaction inhibits Wnt-mediated signaling. Interacts with LRP6. Widely expressed at low levels with highest levels in bone, cartilage, kidney, liver, bone marrow and primary osteoblasts differentiated for 21 days. Detected in the subendothelial layer of the aortic intima (at protein level).

It localises to the secreted. It is found in the extracellular space. The protein localises to the extracellular matrix. Functionally, negative regulator of bone growth that acts through inhibition of Wnt signaling and bone formation. This is Sclerostin from Homo sapiens (Human).